The following is a 176-amino-acid chain: Centromere protein R (176 aa).

Residue K8 forms a Glycyl lysine isopeptide (Lys-Gly) (interchain with G-Cter in SUMO2) linkage. S17 is subject to Phosphoserine. Residues 20–50 (PSKIMRKKSITAFSPTTGTYQLSPFSSPRTP) are DD1. K22 is covalently cross-linked (Glycyl lysine isopeptide (Lys-Gly) (interchain with G-Cter in SUMO2)). Phosphoserine is present on S28. The span at 34–48 (PTTGTYQLSPFSSPR) shows a compositional bias: polar residues. Residues 34 to 80 (PTTGTYQLSPFSSPRTPKEQEHRDGPSNGTRKWSVLSSPARQDSTVK) are disordered. The segment covering 49-58 (TPKEQEHRDG) has biased composition (basic and acidic residues). Positions 60 to 80 (SNGTRKWSVLSSPARQDSTVK) are enriched in polar residues. Positions 63-66 (TRKW) match the Nuclear localization signal motif. Phosphoserine is present on S71. Residues 82-112 (SDGFMMLLSKIERSSEKTMEIMKNLSSLQAL) adopt a coiled-coil conformation. The LXXLL motif signature appears at 118–122 (LEDLL). Residues 171–175 (LKAIL) carry the LXXIL motif motif.

As to quaternary structure, homodimer; mediated by the coiled coil domain. Interacts with CCNA2 and MTA1. Interacts with NFKB1 NF-kappa-B subunit. Component of the CENPA-CAD complex, composed of CENPI, CENPK, CENPL, CENPO, CENPP, CENPQ, CENPR and CENPS. The CENPA-CAD complex interacts with the CENPA-NAC complex, at least composed of CENPA, CENPC, CENPH, CENPM, CENPN, CENPT and CENPU. Interacts with TASOR.

The protein localises to the nucleus. It localises to the chromosome. The protein resides in the centromere. Its subcellular location is the kinetochore. Its function is as follows. Transcription coregulator that can have both coactivator and corepressor functions. Involved in the coactivation of nuclear receptors for retinoid X (RXRs) and thyroid hormone (TRs) in a ligand-dependent fashion. In contrast, it does not coactivate nuclear receptors for retinoic acid, vitamin D, progesterone receptor, nor glucocorticoid. Acts as a coactivator for estrogen receptor alpha. Acts as a transcriptional corepressor via its interaction with the NFKB1 NF-kappa-B subunit, possibly by interfering with the transactivation domain of NFKB1. Induces apoptosis in breast cancer cells, but not in other cancer cells, via a caspase-2 mediated pathway that involves mitochondrial membrane permeabilization but does not require other caspases. May also act as an inhibitor of cyclin A-associated kinase. Also acts a component of the CENPA-CAD (nucleosome distal) complex, a complex recruited to centromeres which is involved in assembly of kinetochore proteins, mitotic progression and chromosome segregation. May be involved in incorporation of newly synthesized CENPA into centromeres via its interaction with the CENPA-NAC complex. In Rattus norvegicus (Rat), this protein is Centromere protein R (Itgb3bp).